Consider the following 57-residue polypeptide: Putative secreted protein MT0250 (57 aa).

The signal sequence occupies residues 1–32; that stretch reads MNRIVAPAAASVVVGLLLGAAAIFGVTLMVQQ. The tract at residues 34 to 57 is disordered; sequence KKPPLPGGDPSSSVLNRVEYGNRS.

In Mycobacterium tuberculosis (strain CDC 1551 / Oshkosh), this protein is Putative secreted protein MT0250.